The chain runs to 206 residues: Small ribosomal subunit protein uS4 (206 aa).

Residues 96-157 (GRLDNVVYRM…KAKKQSRVRA (62 aa)) enclose the S4 RNA-binding domain.

The protein belongs to the universal ribosomal protein uS4 family. Part of the 30S ribosomal subunit. Contacts protein S5. The interaction surface between S4 and S5 is involved in control of translational fidelity.

In terms of biological role, one of the primary rRNA binding proteins, it binds directly to 16S rRNA where it nucleates assembly of the body of the 30S subunit. With S5 and S12 plays an important role in translational accuracy. The sequence is that of Small ribosomal subunit protein uS4 from Sodalis glossinidius (strain morsitans).